The following is a 638-amino-acid chain: Phosphomethylpyrimidine synthase (638 aa).

Residues asparagine 233, methionine 262, tyrosine 291, histidine 327, 347–349 (SRG), 388–391 (DGLR), and glutamate 427 each bind substrate. Histidine 431 contacts Zn(2+). Residue tyrosine 454 coordinates substrate. Histidine 495 is a Zn(2+) binding site. Residues cysteine 575, cysteine 578, and cysteine 583 each contribute to the [4Fe-4S] cluster site.

This sequence belongs to the ThiC family. Homodimer. The cofactor is [4Fe-4S] cluster.

It carries out the reaction 5-amino-1-(5-phospho-beta-D-ribosyl)imidazole + S-adenosyl-L-methionine = 4-amino-2-methyl-5-(phosphooxymethyl)pyrimidine + CO + 5'-deoxyadenosine + formate + L-methionine + 3 H(+). Its pathway is cofactor biosynthesis; thiamine diphosphate biosynthesis. Catalyzes the synthesis of the hydroxymethylpyrimidine phosphate (HMP-P) moiety of thiamine from aminoimidazole ribotide (AIR) in a radical S-adenosyl-L-methionine (SAM)-dependent reaction. This chain is Phosphomethylpyrimidine synthase, found in Saccharophagus degradans (strain 2-40 / ATCC 43961 / DSM 17024).